We begin with the raw amino-acid sequence, 902 residues long: MSQSKEDKIRSILEAKNIKSNFQNKENLSEFNEKKASKRAEDLLDVYYNTLSTADMEFPYWYNREYRKSDGDIPVVRRAKALKAAFSHMTPNIIPGEKIVMQKTRHYRGSFPMPWVSESFFVAQGEQMREEAKKLASNTADELTKFGSGGGNVTESFGNVVSIAGKFGMRKEEVPVLVKMAKEWVGKSVEDLGFHYEKMMPDYDLKENLMSTLICMFDSGYTLPQGREVINYFYPLNYGLDGIIEMAKECKKAVAGNASGDGLIGMDRLYFYEAVIQVIEGLQTWILNYAKHAKYLESIETDLEAKKEYSDLVEILEHIAHKQPRTFREALQLTYTIHIASVNEDAISGMSIGRFGQILYPWYEQDIEKGLITKEEVIELLELYRIKITCIDCFASAGVNGGVLSGNTFNTLSIGGLKEDGSTGANELEELLLEASMRCRTPQPSLTMLYDEKLPEDFLMKAAECTKLGSGYPAWVNNSNGTTFMMKQFADEGMTVEEARAFALGGCLETSPGCWKQLTLNGKTYSIAGGAGQSAGSGVHFIANPKILELVLMNGKDYRMNIQVFEPHNKPLDTYEEVIEVFKDYYKQAINVLERANNIELDIWRKFDTSIINSLLKPDCLDKGQHIGNMGYRYNATLNVETCGTVTMVNSFAALKKLVYDDKAFTIEEIKDAILNNFGFKDALEVGNYSMADQVKVDKTGKYDAIYKACLDAPKYGNNDLYADNILKNYEVWLSKVCEEAQSLYAKKMYPCQISVSTHGPQGAATLATPDGRLSGTTYSDGSVSAYAGTDKNGVYALFESATIWDQAVVQNSQMNLKLHPTTIKGQQGTKKLLDLTRSYLRKGGFHIQYNVVDSETLKDAQKNPDNYRQLMVRVAGFTQYWCELGKPIQDEVIARTEYEGV.

A PFL domain is found at 38–774 (KRAEDLLDVY…ATLATPDGRL (737 aa)). 4-hydroxyphenylacetate contacts are provided by serine 348 and cysteine 507. Residue cysteine 507 is the Cysteine radical intermediate of the active site. Residue glutamate 509 is the Proton donor of the active site. Positions 540 and 641 each coordinate 4-hydroxyphenylacetate. One can recognise a Glycine radical domain in the interval 782-902 (GSVSAYAGTD…VIARTEYEGV (121 aa)). Glycine 877 carries the post-translational modification Glycine radical.

Belongs to the glycyl radical enzyme (GRE) family. HPAD subfamily. Heterooctamer consisting of 4 large (HpdB) subunits and 4 small (HpdC) subunits. Also forms a catalytically inactive homodimer. In terms of processing, phosphorylated on serine. Phosphorylation may trigger the formation of the active heterooctamers and thereby regulates enzyme activity. Requires the activating protein HpdA to generate the key active site glycyl radical that is involved in catalysis.

The catalysed reaction is 4-hydroxyphenylacetate + H(+) = 4-methylphenol + CO2. It catalyses the reaction 3,4-dihydroxyphenylacetate + H(+) = 4-methylcatechol + CO2. The enzyme catalyses 2-hydroxy-2-(4-hydroxyphenyl)acetate + H(+) = 4-hydroxybenzyl alcohol + CO2. Enzyme activity catalyzed by the HPA decarboxylase complex is rapidly and irreversibly inactivated by oxygen. Competitively inhibited by p-hydroxyphenylacetamide. Not inhibited by m- or o-hydroxyphenyl-acetate, p-hydroxybenzoate or p-hydroxyphenylpropionate. Its function is as follows. Glycyl radical subunit of the HPA decarboxylase that decarboxylates phenylacetates with a hydroxyl group in the p-position. Active toward 4-hydroxyphenylacetate, 3,4-dihydroxyphenylacetate and to a lesser extent p-hydroxymandelate (2-hydroxy-2-(4-hydroxyphenyl)acetate), forming 4-methylphenol, 4-methylcatechol and 4-hydroxybenzylalcohol, respectively. Is likely involved in the catabolism of aromatic amino acids such as tyrosine fermentation. 4-methylphenol (p-cresol) formation provides metabolic toxicity, which may benefit the pathogen C.difficile by suppression of the endogenous gastrointestinal microflora, allowing the development of gastrointestinal infections. The large subunit is the catalytic subunit that binds the substrate. This is 4-hydroxyphenylacetate decarboxylase glycyl radical subunit from Clostridioides difficile (Peptoclostridium difficile).